The primary structure comprises 296 residues: MSSKTQLRQQFCELTGTSNTTATKYLESVRYDLARAIDNYYNKHPNKAQVTKKPVKVKIDDRLIQIFDKYKDSEDPNKIDIEGTLTYLGDLGISPDQIESLSLALLLKSPKTGVFTRENFLHIWQYYQCFDIGAMSEFITRFNKDLVNNIGGFKDISTVSDDENKSVPLKFQDLYNFTFKFSLETESQKFLDLDTAIEYWKLLLPIITETYSKDNKLDEEFKNHVNERVEQWFKFLTDTEYMTKKSISYDSWSMFYLFFKEIVLIDPIKFKDYDEMAAWPSVVDEFLEYLHDFELL.

A UBA-like domain is found at 4–41 (KTQLRQQFCELTGTSNTTATKYLESVRYDLARAIDNYY). The 234-residue stretch at 58 to 291 (KIDDRLIQIF…VVDEFLEYLH (234 aa)) folds into the DCUN1 domain.

Its function is as follows. May contribute to neddylation of cullin components of SCF-type E3 ubiquitin ligase complexes. Neddylation of cullins play an essential role in the regulation of SCF-type complexes activity. This chain is Defective in cullin neddylation protein 1 (DCN1), found in Candida albicans (strain SC5314 / ATCC MYA-2876) (Yeast).